The chain runs to 207 residues: Ribonuclease HII (207 aa).

In terms of domain architecture, RNase H type-2 spans 18–206 (EFIVGVDEVG…VKNILQLLEK (189 aa)). Asp-24, Glu-25, and Asp-115 together coordinate a divalent metal cation.

Belongs to the RNase HII family. The cofactor is Mn(2+). Mg(2+) serves as cofactor.

Its subcellular location is the cytoplasm. The enzyme catalyses Endonucleolytic cleavage to 5'-phosphomonoester.. Endonuclease that specifically degrades the RNA of RNA-DNA hybrids. The sequence is that of Ribonuclease HII from Hydrogenovibrio crunogenus (strain DSM 25203 / XCL-2) (Thiomicrospira crunogena).